The chain runs to 473 residues: Azaphilone pigments biosynthesis cluster protein L (473 aa).

The first 23 residues, 1–23 (MAELSIASGIVGLLSLGIQVTQS), serve as a signal peptide directing secretion. ANK repeat units follow at residues 403–432 (EYGNALQAASSGGHWKVVQMLLDQGADVNA) and 436–465 (RYGNALHAASSRGHKKVVQMLLDHGANVST). N-linked (GlcNAc...) asparagine glycosylation occurs at Asn-462.

Its function is as follows. Part of the gene cluster that mediates the biosynthesis of azaphilone pigments (MonAzPs), a complex mixture of compounds with a common azaphilone skeleton very widely used as food colorants. Seems not to play a direct role in the biosynthesis but might have a regulatorx function. This chain is Azaphilone pigments biosynthesis cluster protein L, found in Monascus ruber (Mold).